The primary structure comprises 91 residues: Thioredoxin (91 aa).

Residues 2-91 (SDSIVHVTDD…SRQSEVEATK (90 aa)) form the Thioredoxin domain. Residues C33 and C36 are joined by a disulfide bond.

It belongs to the thioredoxin family.

Participates in various redox reactions through the reversible oxidation of its active center dithiol to a disulfide and catalyzes dithiol-disulfide exchange reactions. This is Thioredoxin (trxA) from Thiocapsa roseopersicina.